The chain runs to 53 residues: uncharacterized protein (53 aa).

It localises to the mitochondrion matrix. The protein resides in the kinetoplast. This is an uncharacterized protein from Trypanosoma brucei brucei.